Consider the following 509-residue polypeptide: Otolin-1 (509 aa).

The signal sequence occupies residues 1-25 (MPSLRLLAILTTLLAVVLMATQSSA). Positions 23 to 96 (SSATRTTRRP…AYSLSPTDST (74 aa)) are disordered. The segment covering 42-54 (RGGGTGGGGGGGD) has biased composition (gly residues). Residues 62–75 (RQTTTTMSPSSSLG) are compositionally biased toward polar residues. Asn121 carries N-linked (GlcNAc...) asparagine glycosylation. Residues 193 to 244 (GDKGDQGDTGMPGAPGILGKEGQKGDLGPKGEKGETGLPGLKGDLGERGKPG) enclose the Collagen-like 1 domain. Positions 202-372 (GMPGAPGILG…GPKGPQGETA (171 aa)) are disordered. Basic and acidic residues predominate over residues 213 to 227 (EGQKGDLGPKGEKGE). N-linked (GlcNAc...) asparagine glycans are attached at residues Asn246 and Asn311. Positions 285-329 (GEKGEKGEAGLPGPPGPRGSVGPPGVNGSNGLPGPVGLRGQLGSP) constitute a Collagen-like 2 domain. Over residues 302–322 (RGSVGPPGVNGSNGLPGPVGL) the composition is skewed to low complexity. The span at 327–342 (GSPGGKGEAGGRGPPG) shows a compositional bias: gly residues. Residues 372-509 (AEQIRSAFSV…GFLLYADPKA (138 aa)) enclose the C1q domain. The N-linked (GlcNAc...) asparagine glycan is linked to Asn417.

This sequence belongs to the OTOL1 family. Homooligomer; disulfide-linked; probably forms homotrimers. Interacts with otomp.

It localises to the secreted. The protein localises to the extracellular space. The protein resides in the extracellular matrix. Collagen-like protein, which provides an organic scaffold for otoliths onto the sensory epithelium of the inner ear. Acts as a scaffold for biomineralization by sequestering calcium. This Oncorhynchus mykiss (Rainbow trout) protein is Otolin-1 (Otol1).